A 371-amino-acid polypeptide reads, in one-letter code: Phospholipid-transporting ATPase accessory subunit ivn1 (371 aa).

Residues methionine 1–threonine 39 lie on the Cytoplasmic side of the membrane. Residues valine 40 to valine 60 form a helical membrane-spanning segment. Residues alanine 61–asparagine 325 are Extracellular-facing. 2 disulfide bridges follow: cysteine 75–cysteine 111 and cysteine 166–cysteine 181. An N-linked (GlcNAc...) asparagine glycan is attached at asparagine 99. 6 N-linked (GlcNAc...) asparagine glycosylation sites follow: asparagine 190, asparagine 212, asparagine 216, asparagine 233, asparagine 284, and asparagine 297. The chain crosses the membrane as a helical span at residues tyrosine 326 to leucine 346. Over serine 347–serine 371 the chain is Cytoplasmic.

This sequence belongs to the CDC50/LEM3 family.

The protein resides in the endoplasmic reticulum membrane. Functionally, accessory component of a P4-ATPase flippase complex which catalyzes the hydrolysis of ATP coupled to the transport of aminophospholipids from the lumenal to the cytosolic leaflet of membranes and ensures the maintenance of asymmetric distribution of phospholipids. The sequence is that of Phospholipid-transporting ATPase accessory subunit ivn1 (ivn1) from Schizosaccharomyces pombe (strain 972 / ATCC 24843) (Fission yeast).